The primary structure comprises 210 residues: MRMRNKPWAEDFLLQHDDIVSIDLARKDHIVDWFDQVQPIHIEVGSGMGRFITEMAKAHPEINYIGIERDKNVMIRIVEKAVEQNIRNLRLLTVDAEKLTEIFNEGEIDRIYLNFSDPWPKARHAKRRLTHENFLKVYETILDKDGEIHFKTDNQALFEYSIESMSHYGMKLKNINLNLHDNEPEDNIRTEYEDKFSNKGFRINRLEARF.

S-adenosyl-L-methionine-binding residues include E43, E68, D95, and D117. D117 is a catalytic residue. Substrate-binding positions include K121, D153, and 190 to 193; that span reads TEYE.

The protein belongs to the class I-like SAM-binding methyltransferase superfamily. TrmB family.

The enzyme catalyses guanosine(46) in tRNA + S-adenosyl-L-methionine = N(7)-methylguanosine(46) in tRNA + S-adenosyl-L-homocysteine. The protein operates within tRNA modification; N(7)-methylguanine-tRNA biosynthesis. Its function is as follows. Catalyzes the formation of N(7)-methylguanine at position 46 (m7G46) in tRNA. This is tRNA (guanine-N(7)-)-methyltransferase from Macrococcus caseolyticus (strain JCSC5402) (Macrococcoides caseolyticum).